The chain runs to 71 residues: Ribosome modulation factor (71 aa).

This sequence belongs to the ribosome modulation factor family.

It is found in the cytoplasm. Functionally, during stationary phase, converts 70S ribosomes to an inactive dimeric form (100S ribosomes). In Pseudomonas savastanoi pv. phaseolicola (strain 1448A / Race 6) (Pseudomonas syringae pv. phaseolicola (strain 1448A / Race 6)), this protein is Ribosome modulation factor.